Reading from the N-terminus, the 463-residue chain is Casein kinase 1 (463 aa).

The region spanning 9–278 is the Protein kinase domain; sequence FKLGRKIGSG…LKRLFRDLFI (270 aa). ATP-binding positions include 15-23 and Lys-38; that span reads IGSGSFGEL. Asp-128 serves as the catalytic Proton acceptor. A compositionally biased stretch (polar residues) spans 296-306; the sequence is ESNRLRSSGRT. A disordered region spans residues 296–448; it reads ESNRLRSSGR…TARNVHDDPT (153 aa). The segment covering 315 to 328 has biased composition (basic and acidic residues); sequence ERTERAAARQDVPD. Composition is skewed to polar residues over residues 376–396 and 404–440; these read TSSS…SRPS and NRSN…TKTA.

The protein belongs to the protein kinase superfamily. CK1 Ser/Thr protein kinase family. Casein kinase I subfamily. Monomer. In terms of processing, autophosphorylated. As to expression, expressed in leaves, stems, panicles and seeds. Expressed in root tissues and lamina joints.

The protein localises to the cytoplasm. The protein resides in the nucleus. It carries out the reaction L-seryl-[protein] + ATP = O-phospho-L-seryl-[protein] + ADP + H(+). It catalyses the reaction L-threonyl-[protein] + ATP = O-phospho-L-threonyl-[protein] + ADP + H(+). Inhibited by N-(2-aminoethyl)-5-chloroisoquinoline-8-sulfonamide (CKI-7). Casein kinases are operationally defined by their preferential utilization of acidic proteins such as caseins as substrates. Can phosphorylate casein in vitro. Required for normal root development through modulation of cell elongation. Plants silencing CKI1 show abnormal root development, with reduced number of lateral and adventitious roots, and shortened primary roots as a result of reduced cell elongation. May be involved in abscisic acid (ABA) and brassinosteroid (BR) signaling pathways. Plays an important role in the adaptive growth and fitness under low temperature (LT) conditions. May confer tolerance to LT through an auxin-dependent process. The chain is Casein kinase 1 (CKI1) from Oryza sativa subsp. japonica (Rice).